A 694-amino-acid polypeptide reads, in one-letter code: Elongation factor G (694 aa).

Positions 9 to 288 (SKIRNIGIMA…VIVKWLPSPK (280 aa)) constitute a tr-type G domain. Residues 18 to 25 (AHIDAGKT), 82 to 86 (DTPGH), and 136 to 139 (NKMD) each bind GTP.

Belongs to the TRAFAC class translation factor GTPase superfamily. Classic translation factor GTPase family. EF-G/EF-2 subfamily.

Its subcellular location is the cytoplasm. In terms of biological role, catalyzes the GTP-dependent ribosomal translocation step during translation elongation. During this step, the ribosome changes from the pre-translocational (PRE) to the post-translocational (POST) state as the newly formed A-site-bound peptidyl-tRNA and P-site-bound deacylated tRNA move to the P and E sites, respectively. Catalyzes the coordinated movement of the two tRNA molecules, the mRNA and conformational changes in the ribosome. The sequence is that of Elongation factor G from Chlamydia abortus (strain DSM 27085 / S26/3) (Chlamydophila abortus).